Reading from the N-terminus, the 624-residue chain is DNA damage response protein Mdb1 (624 aa).

Disordered regions lie at residues 177–237 (ERIP…DDES), 249–386 (GETK…KNKH), and 591–624 (IGKR…EQRT). 2 stretches are compositionally biased toward basic and acidic residues: residues 200 to 217 (DEKL…HSSD) and 225 to 235 (EDQKQLNKTDD). Residues 250–263 (ETKSPSSVSQSLSG) show a composition bias toward polar residues. 2 positions are modified to phosphoserine: Ser253 and Ser283. The segment covering 294-305 (NISDSSIKNNSI) has biased composition (low complexity). 2 stretches are compositionally biased toward basic and acidic residues: residues 306 to 316 (HSDEVNPEVRP) and 325 to 352 (EESK…REAE). Positions 356-386 (ISTNYSFPSSSLEDQPDKNVQSSAVENKNKH) are enriched in polar residues. Residues 376 to 468 (QSSAVENKNK…KVLDFRSYKY (93 aa)) enclose the BRCT domain.

As to quaternary structure, homodimer. Interacts (via BRCT domain) with hta1 peptide containing the S/T-Q motif in vitro; this interaction requires phosphorylation of the hta1 peptide at the S/T-Q motif.

It is found in the nucleus. The protein resides in the chromosome. It localises to the cytoplasm. The protein localises to the cytoskeleton. Its subcellular location is the spindle. Functionally, involved in DNA damage response (DDR) mediated through its interaction with phosphorylated H2A proteins hta1 and hta2 which mark the discrete foci of DNA damage. The sequence is that of DNA damage response protein Mdb1 from Schizosaccharomyces pombe (strain 972 / ATCC 24843) (Fission yeast).